The chain runs to 331 residues: Ketol-acid reductoisomerase (NADP(+)) (331 aa).

One can recognise a KARI N-terminal Rossmann domain in the interval 2 to 181 (IKKYYESDAD…GATRAVVFET (180 aa)). NADP(+) is bound by residues 25 to 28 (YGSQ), Arg48, Ser52, and 82 to 85 (DESQ). His107 is a catalytic residue. Gly133 is an NADP(+) binding site. The KARI C-terminal knotted domain maps to 182-327 (TFREETETDL…AEIRGLMPQF (146 aa)). Mg(2+) is bound by residues Asp190, Glu194, Glu226, and Glu230. Ser251 contributes to the substrate binding site.

This sequence belongs to the ketol-acid reductoisomerase family. Requires Mg(2+) as cofactor.

The enzyme catalyses (2R)-2,3-dihydroxy-3-methylbutanoate + NADP(+) = (2S)-2-acetolactate + NADPH + H(+). It catalyses the reaction (2R,3R)-2,3-dihydroxy-3-methylpentanoate + NADP(+) = (S)-2-ethyl-2-hydroxy-3-oxobutanoate + NADPH + H(+). The protein operates within amino-acid biosynthesis; L-isoleucine biosynthesis; L-isoleucine from 2-oxobutanoate: step 2/4. Its pathway is amino-acid biosynthesis; L-valine biosynthesis; L-valine from pyruvate: step 2/4. In terms of biological role, involved in the biosynthesis of branched-chain amino acids (BCAA). Catalyzes an alkyl-migration followed by a ketol-acid reduction of (S)-2-acetolactate (S2AL) to yield (R)-2,3-dihydroxy-isovalerate. In the isomerase reaction, S2AL is rearranged via a Mg-dependent methyl migration to produce 3-hydroxy-3-methyl-2-ketobutyrate (HMKB). In the reductase reaction, this 2-ketoacid undergoes a metal-dependent reduction by NADPH to yield (R)-2,3-dihydroxy-isovalerate. In Methanosphaerula palustris (strain ATCC BAA-1556 / DSM 19958 / E1-9c), this protein is Ketol-acid reductoisomerase (NADP(+)).